A 367-amino-acid polypeptide reads, in one-letter code: Phosphoribosylaminoimidazole-succinocarboxamide synthase (367 aa).

It belongs to the SAICAR synthetase family.

It catalyses the reaction 5-amino-1-(5-phospho-D-ribosyl)imidazole-4-carboxylate + L-aspartate + ATP = (2S)-2-[5-amino-1-(5-phospho-beta-D-ribosyl)imidazole-4-carboxamido]succinate + ADP + phosphate + 2 H(+). It participates in purine metabolism; IMP biosynthesis via de novo pathway; 5-amino-1-(5-phospho-D-ribosyl)imidazole-4-carboxamide from 5-amino-1-(5-phospho-D-ribosyl)imidazole-4-carboxylate: step 1/2. The polypeptide is Phosphoribosylaminoimidazole-succinocarboxamide synthase (Psychromonas ingrahamii (strain DSM 17664 / CCUG 51855 / 37)).